We begin with the raw amino-acid sequence, 348 residues long: Protein arginine N-methyltransferase 1 (348 aa).

In terms of domain architecture, SAM-dependent MTase PRMT-type spans 24–342 (KDYYFDSYAH…KGEVCDLNEQ (319 aa)). 5 residues coordinate S-adenosyl-L-methionine: H37, R46, G70, E92, and E121. Catalysis depends on residues E139 and E148.

The protein belongs to the class I-like SAM-binding methyltransferase superfamily. Protein arginine N-methyltransferase family. In terms of assembly, interacts with daf-16. Interacts with pgl-1 and pgl-3. Interacts with alg-1. Widely expressed in pharyngeal, body wall muscle, intestinal and vulval cells.

Its subcellular location is the cytoplasm. It is found in the nucleus. It catalyses the reaction L-arginyl-[protein] + 2 S-adenosyl-L-methionine = N(omega),N(omega)-dimethyl-L-arginyl-[protein] + 2 S-adenosyl-L-homocysteine + 2 H(+). It carries out the reaction L-arginyl-[protein] + S-adenosyl-L-methionine = N(omega)-methyl-L-arginyl-[protein] + S-adenosyl-L-homocysteine + H(+). In terms of biological role, arginine methyltransferase that methylates (mono and asymmetric dimethylation) the guanidino nitrogens of arginyl residues present in target proteins. Catalyzes the formation of monomethylarginine and asymmetric dimethylarginine on histones H2A and H4, a specific tag for epigenetic transcriptional activation. Catalyzes asymmetric arginine dimethylation of mitochondrial proteins necessary for mitochondrial oxidative phosphorylation activity and thus aerobic respiration and ATP synthesis, and the mitochondrial stress response. Methylates arginine residues in P-granule components pgl-1 and pgl-3 to promote P-granule degradation by autophagy in somatic cells to ensure exclusive localization of the P-granules in germ cells. Modulates the interaction of P-granule proteins epg-2 and sepa-1. Methylates arginine residues in daf-16, which blocks ftt-2 binding to daf-16, prevents akt-mediated phosphorylation and allows for daf-16 to translocate to the nucleus. In turn, association with daf-16 therefore allows for the transcriptional activation of daf-16 and regulation of longevity-related genes. Maintains lifespan by modulating daf-16 activity downstream of the daf-2 signaling pathway. Plays a role in heat and oxidative stress resistance. Role in stress resistance and also fat storage may be in association with the daf-2 signaling pathway. Required for normal feeding behavior. In Caenorhabditis elegans, this protein is Protein arginine N-methyltransferase 1.